The chain runs to 546 residues: Glutathione synthetase, chloroplastic (546 aa).

The transit peptide at Met-1–Glu-63 directs the protein to the chloroplast. Arg-200 provides a ligand contact to substrate. Glu-216 contributes to the ATP binding site. Mg(2+)-binding residues include Glu-216 and Asn-218. Substrate-binding positions include Ile-220–Ser-223, Glu-288–Asn-290, Gln-294, and Arg-342–Tyr-345. Residues Lys-381, Lys-435 to Asn-444, Tyr-446, Met-471 to Ile-474, and Glu-497 each bind ATP. Glu-439 provides a ligand contact to Mg(2+). Residue Arg-522 participates in substrate binding. Lys-524 and Glu-530 together coordinate ATP. Residue Val-533–Ala-534 coordinates substrate.

This sequence belongs to the eukaryotic GSH synthase family. In terms of assembly, homodimer. Requires Mg(2+) as cofactor.

The protein localises to the plastid. It is found in the chloroplast. The catalysed reaction is gamma-L-glutamyl-L-cysteine + glycine + ATP = glutathione + ADP + phosphate + H(+). The protein operates within sulfur metabolism; glutathione biosynthesis; glutathione from L-cysteine and L-glutamate: step 2/2. The polypeptide is Glutathione synthetase, chloroplastic (GSH2) (Solanum lycopersicum (Tomato)).